The following is a 487-amino-acid chain: Glutamyl-tRNA(Gln) amidotransferase subunit A (487 aa).

Residues Lys-77 and Ser-152 each act as charge relay system in the active site. Residue Ser-176 is the Acyl-ester intermediate of the active site.

Belongs to the amidase family. GatA subfamily. In terms of assembly, heterotrimer of A, B and C subunits.

It carries out the reaction L-glutamyl-tRNA(Gln) + L-glutamine + ATP + H2O = L-glutaminyl-tRNA(Gln) + L-glutamate + ADP + phosphate + H(+). Allows the formation of correctly charged Gln-tRNA(Gln) through the transamidation of misacylated Glu-tRNA(Gln) in organisms which lack glutaminyl-tRNA synthetase. The reaction takes place in the presence of glutamine and ATP through an activated gamma-phospho-Glu-tRNA(Gln). This Ligilactobacillus salivarius (strain UCC118) (Lactobacillus salivarius) protein is Glutamyl-tRNA(Gln) amidotransferase subunit A.